A 727-amino-acid polypeptide reads, in one-letter code: Long-chain-fatty-acid--[acyl-carrier-protein] ligase AEE15, chloroplastic (727 aa).

The transit peptide at 1–66 directs the protein to the chloroplast; it reads MQIRLKPDYS…PSFRRFRVHC (66 aa).

It belongs to the ATP-dependent AMP-binding enzyme family.

It is found in the plastid. It localises to the chloroplast. It carries out the reaction a long-chain fatty acid + holo-[ACP] + ATP = a long-chain fatty acyl-[ACP] + AMP + diphosphate. Functionally, probably involved in the activation of fatty acids to acyl-carrier-protein prior to fatty acid elongation in plastids. Acts on medium- to long-chain fatty acids. This chain is Long-chain-fatty-acid--[acyl-carrier-protein] ligase AEE15, chloroplastic (AAE15), found in Arabidopsis thaliana (Mouse-ear cress).